The following is a 65-amino-acid chain: Sarcoplasmic/endoplasmic reticulum calcium ATPase regulator ARLN (65 aa).

Methionine 1 bears the N-acetylmethionine mark. The tract at residues 1 to 38 (MEVGQAASGTDGVRERRGSSAARRRSQDEPVQSGMNGI) is disordered. Phosphoserine is present on residues serine 19 and serine 26. A helical membrane pass occupies residues 44–64 (WLDLWLFILFDLALFIFVYLL).

As to quaternary structure, homooligomer. Can also form heterooligomers with other sarcoplasmic/endoplasmic reticulum calcium ATPase (SERCA) regulators ERLN, PLN, SLN and STRIT1/DWORF. Monomer. Interacts as a monomer with ATP2A2/SERCA2; the interaction results in inhibition of ATP2A2 Ca(2+) affinity.

The protein localises to the endoplasmic reticulum membrane. Inhibits the activity of the calcium ATPases ATP2A2/SERCA2 and ATP2A3/SERCA3 by decreasing their apparent affinity for Ca(2+). In Rattus norvegicus (Rat), this protein is Sarcoplasmic/endoplasmic reticulum calcium ATPase regulator ARLN (Arln).